The primary structure comprises 336 residues: Phosphate acyltransferase (336 aa).

It belongs to the PlsX family. As to quaternary structure, homodimer. Probably interacts with PlsY.

The protein localises to the cytoplasm. It catalyses the reaction a fatty acyl-[ACP] + phosphate = an acyl phosphate + holo-[ACP]. It functions in the pathway lipid metabolism; phospholipid metabolism. Catalyzes the reversible formation of acyl-phosphate (acyl-PO(4)) from acyl-[acyl-carrier-protein] (acyl-ACP). This enzyme utilizes acyl-ACP as fatty acyl donor, but not acyl-CoA. In Ectopseudomonas mendocina (strain ymp) (Pseudomonas mendocina), this protein is Phosphate acyltransferase.